The chain runs to 539 residues: uncharacterized protein (539 aa).

The segment at Ala316 to Glu433 is disordered. Over residues His318–Lys352 the composition is skewed to basic residues. Residues Lys362–Phe384 show a composition bias toward basic and acidic residues. A compositionally biased stretch (polar residues) spans Asn390–Gly402.

This is an uncharacterized protein from Treponema pallidum (strain Nichols).